Consider the following 682-residue polypeptide: Potassium-transporting ATPase ATP-binding subunit (682 aa).

Helical transmembrane passes span 34-54 (PVMF…IAMA), 62-82 (ALFS…ANFA), 219-239 (IALT…TATL), and 254-274 (VLVA…LSAI). The active-site 4-aspartylphosphate intermediate is Asp307. Residues Asp344, Glu348, 377–384 (FTAQSRMS), and Lys395 each bind ATP. 2 residues coordinate Mg(2+): Asp518 and Asp522. A run of 3 helical transmembrane segments spans residues 588 to 608 (FAII…LNIM), 616 to 636 (AILS…PLAL), and 656 to 676 (IYGL…DLLL).

It belongs to the cation transport ATPase (P-type) (TC 3.A.3) family. Type IA subfamily. As to quaternary structure, the system is composed of three essential subunits: KdpA, KdpB and KdpC.

The protein localises to the cell inner membrane. The enzyme catalyses K(+)(out) + ATP + H2O = K(+)(in) + ADP + phosphate + H(+). Part of the high-affinity ATP-driven potassium transport (or Kdp) system, which catalyzes the hydrolysis of ATP coupled with the electrogenic transport of potassium into the cytoplasm. This subunit is responsible for energy coupling to the transport system and for the release of the potassium ions to the cytoplasm. This is Potassium-transporting ATPase ATP-binding subunit from Escherichia coli O6:K15:H31 (strain 536 / UPEC).